The following is a 486-amino-acid chain: MSAANPETPNSTISREASTQSSSAAASQGWVLPEGKIVPNTVFVGGIDARMDETEIGSCFGRYGSVKEVKIITNRTGVSKGYGFVSFVNDVDVQKIVGSQIHFHGKKLKLGPAIRKQKLCARHVQPRPLVVNPPPPPQFQNVWRNPNTETYLQPQITPNPVTQHVQAYSAYPHSPGQVITGCQLLVYNYQEYPTYPDSAFQVTTGYQLPVYNYQPFPAYPRSPFQVTAGYQLPVYNYQAFPAYPNSPFQVATGYQFPVYNYQPFPAYPSSPFQVTAGYQLPVYNYQAFPAYPNSPFQVATGYQFPVYNYQAFPAYPNSPVQVTTGYQLPVYNYQAFPAYPNSPFQVATGYQFPVYNYQAFPAYPNSPVQVTTGYQLPVYNYQAFPAYPNSPFQVATGYQFPVYNYQAFPAYPNSPVQVTTGYQLPVYNYQAFPAYPNSAVQVTTGYQFHVYNYQMPPQCPVGEQRRNLWTEAYKWWYLVCLIQRRD.

Positions 1-10 are enriched in polar residues; that stretch reads MSAANPETPN. Positions 1–27 are disordered; sequence MSAANPETPNSTISREASTQSSSAAAS. The segment covering 11–27 has biased composition (low complexity); that stretch reads STISREASTQSSSAAAS. Residues 40-115 form the RRM domain; that stretch reads NTVFVGGIDA…KKLKLGPAIR (76 aa). DAZ domains lie at 167–190, 191–214, 215–238, 239–262, 263–286, 287–310, 311–334, 335–358, 359–382, 383–406, 407–430, and 431–454; these read AYSA…YNYQ, EYPT…YNYQ, PFPA…YNYQ, and AFPA…YNYQ.

This sequence belongs to the RRM DAZ family. As to quaternary structure, forms a heterodimer with BOLL and DAZL. Interacts with PUM2, DAZAP1, DAZAP2, DZIP1 and DZIP3. As to expression, testis specific.

Its subcellular location is the cytoplasm. The protein localises to the nucleus. Its function is as follows. RNA-binding protein that plays an essential role in spermatogenesis. May act by binding to the 3'-UTR of mRNAs and regulating their translation. The protein is Deleted in azoospermia protein 3 (DAZ3) of Homo sapiens (Human).